The chain runs to 189 residues: Pyridoxal 5'-phosphate synthase subunit PdxT (189 aa).

Gly47–Ser49 serves as a coordination point for L-glutamine. Cys79 serves as the catalytic Nucleophile. Residues Arg105 and Ile132–Arg133 contribute to the L-glutamine site. Active-site charge relay system residues include His168 and Glu170.

This sequence belongs to the glutaminase PdxT/SNO family. As to quaternary structure, in the presence of PdxS, forms a dodecamer of heterodimers. Only shows activity in the heterodimer.

It carries out the reaction aldehydo-D-ribose 5-phosphate + D-glyceraldehyde 3-phosphate + L-glutamine = pyridoxal 5'-phosphate + L-glutamate + phosphate + 3 H2O + H(+). The catalysed reaction is L-glutamine + H2O = L-glutamate + NH4(+). It participates in cofactor biosynthesis; pyridoxal 5'-phosphate biosynthesis. Functionally, catalyzes the hydrolysis of glutamine to glutamate and ammonia as part of the biosynthesis of pyridoxal 5'-phosphate. The resulting ammonia molecule is channeled to the active site of PdxS. The polypeptide is Pyridoxal 5'-phosphate synthase subunit PdxT (Methanocorpusculum labreanum (strain ATCC 43576 / DSM 4855 / Z)).